Consider the following 847-residue polypeptide: Guanine nucleotide exchange factor VAV3 (847 aa).

Positions 1 to 119 (MEPWKQCAQW…ETLSRLSRTP (119 aa)) constitute a Calponin-homology (CH) domain. A Phosphotyrosine modification is found at tyrosine 141. The region spanning 192–371 (IRSCCLAEIR…KDLAQYVNEV (180 aa)) is the DH domain. The PH domain occupies 400-502 (RPQGDGEIRI…WLEQFEMALS (103 aa)). The segment at 513-562 (FHDFKMHTFTRVTSCRVCQMLLRGTFYQGYLCFKCGAKAHKECLGRVDNC) adopts a Phorbol-ester/DAG-type zinc-finger fold. The tract at residues 560–847 (DNCGRVNSVE…FPSTYVEEDE (288 aa)) is sufficient for interaction with ROS1. Residues 592–660 (PGLPKMQVIR…PSDAVKPSPC (69 aa)) form the SH3 1 domain. The SH2 domain maps to 672–766 (WYAGPMERLQ…TLDTTLQFPY (95 aa)). Residues 788–847 (KVLGIAIARYDFCARDMRELSLLKGDMVKIYTKMSANGWWRGEVNGRVGWFPSTYVEEDE) form the SH3 2 domain.

In terms of assembly, interacts with the PH domain of APS. Interacts with ROS1; constitutive interaction that mediates VAV3 phosphorylation. Interacts (via SH2 domains) with the phosphorylated form of EPHA2. Post-translationally, phosphorylated. Phosphorylation can be mediated by ROS1. In osteoclasts, undergoes tyrosine phosphorylation in response to CSF1. As to expression, abundantly expressed in osteoclasts and mature osteoblasts. Also expressed in bone marrow macrophages (at protein level):.

In terms of biological role, exchange factor for GTP-binding proteins RhoA, RhoG and, to a lesser extent, Rac1. Binds physically to the nucleotide-free states of those GTPases. Plays an important role in angiogenesis. Its recruitment by phosphorylated EPHA2 is critical for EFNA1-induced RAC1 GTPase activation and vascular endothelial cell migration and assembly. May be important for integrin-mediated signaling, at least in some cell types. In osteoclasts, along with SYK tyrosine kinase, required for signaling through integrin alpha-v/beta-1 (ITAGV-ITGB1), a crucial event for osteoclast proper cytoskeleton organization and function. This signaling pathway involves RAC1, but not RHO, activation. Necessary for proper wound healing. In the course of wound healing, required for the phagocytotic cup formation preceding macrophage phagocytosis of apoptotic neutrophils. Responsible for integrin beta-2-mediated macrophage adhesion and, to a lesser extent, contributes to beta-3-mediated adhesion. Does not affect integrin beta-1-mediated adhesion. The chain is Guanine nucleotide exchange factor VAV3 (Vav3) from Mus musculus (Mouse).